The sequence spans 172 residues: Large ribosomal subunit protein uL10 (172 aa).

The protein belongs to the universal ribosomal protein uL10 family. In terms of assembly, part of the ribosomal stalk of the 50S ribosomal subunit. The N-terminus interacts with L11 and the large rRNA to form the base of the stalk. The C-terminus forms an elongated spine to which L12 dimers bind in a sequential fashion forming a multimeric L10(L12)X complex.

Forms part of the ribosomal stalk, playing a central role in the interaction of the ribosome with GTP-bound translation factors. This Rhizobium meliloti (strain 1021) (Ensifer meliloti) protein is Large ribosomal subunit protein uL10.